Consider the following 343-residue polypeptide: Anthranilate phosphoribosyltransferase (343 aa).

Residues glycine 81, 84–85, 91–94, 109–117, and serine 121 contribute to the 5-phospho-alpha-D-ribose 1-diphosphate site; these read GD, NVST, and KHGNRSVSS. An anthranilate-binding site is contributed by glycine 81. Serine 93 is a binding site for Mg(2+). Asparagine 112 contributes to the anthranilate binding site. Arginine 167 lines the anthranilate pocket. Mg(2+) contacts are provided by aspartate 226 and glutamate 227.

This sequence belongs to the anthranilate phosphoribosyltransferase family. Homodimer. Mg(2+) is required as a cofactor.

It catalyses the reaction N-(5-phospho-beta-D-ribosyl)anthranilate + diphosphate = 5-phospho-alpha-D-ribose 1-diphosphate + anthranilate. Its pathway is amino-acid biosynthesis; L-tryptophan biosynthesis; L-tryptophan from chorismate: step 2/5. In terms of biological role, catalyzes the transfer of the phosphoribosyl group of 5-phosphorylribose-1-pyrophosphate (PRPP) to anthranilate to yield N-(5'-phosphoribosyl)-anthranilate (PRA). This chain is Anthranilate phosphoribosyltransferase, found in Chromohalobacter salexigens (strain ATCC BAA-138 / DSM 3043 / CIP 106854 / NCIMB 13768 / 1H11).